The following is a 340-amino-acid chain: Dihydroorotate dehydrogenase (quinone) (340 aa).

FMN-binding positions include 62–66 and Thr-86; that span reads AGLDK. Lys-66 provides a ligand contact to substrate. Residue 111-115 participates in substrate binding; that stretch reads NRMGF. FMN is bound by residues Asn-139 and Asn-172. Asn-172 is a substrate binding site. Ser-175 (nucleophile) is an active-site residue. Asn-177 serves as a coordination point for substrate. FMN is bound by residues Lys-217 and Thr-245. A substrate-binding site is contributed by 246–247; the sequence is NT. FMN contacts are provided by residues Gly-268, Gly-297, and 318-319; that span reads YS.

This sequence belongs to the dihydroorotate dehydrogenase family. Type 2 subfamily. As to quaternary structure, monomer. FMN serves as cofactor.

It localises to the cell membrane. The catalysed reaction is (S)-dihydroorotate + a quinone = orotate + a quinol. It functions in the pathway pyrimidine metabolism; UMP biosynthesis via de novo pathway; orotate from (S)-dihydroorotate (quinone route): step 1/1. In terms of biological role, catalyzes the conversion of dihydroorotate to orotate with quinone as electron acceptor. The polypeptide is Dihydroorotate dehydrogenase (quinone) (Alkalilimnicola ehrlichii (strain ATCC BAA-1101 / DSM 17681 / MLHE-1)).